A 531-amino-acid chain; its full sequence is Developmental and secondary metabolism regulator VE1 (531 aa).

Positions 26 to 220 constitute a Velvet domain; the sequence is NRSLWYQMTV…ADQGCPVRIR (195 aa). The short motif at 40-45 is the Nuclear localization signal element; that stretch reads ERARAC. Disordered stretches follow at residues 206 to 435 and 447 to 517; these read LSKT…SQTS and PVSP…SRAD. Residues 244–253 show a composition bias toward basic and acidic residues; sequence FERREEDFGR. Residues 295–306 show a composition bias toward pro residues; that stretch reads YPPPPPPPPSYE. The span at 348–357 shows a compositional bias: polar residues; it reads YAPTSQSPYS. Residues 381–390 are compositionally biased toward basic and acidic residues; sequence LKHELYDRRQ. Low complexity predominate over residues 391 to 405; that stretch reads STSTYVPPSPSVYST. Residues 416 to 427 show a composition bias toward pro residues; the sequence is SYPPTPVAAPRP. Residues 430–461 form a PEST region; it reads MHSQTSLPALKIDQLVSPVSPLPPIEPQTGPA. Residues 479-491 show a composition bias toward polar residues; the sequence is FAQSTRPLHNGQR.

This sequence belongs to the velvet family. VeA subfamily. As to quaternary structure, component of the heterotrimeric velvet complex composed of LAE1, VE1 and VELB; VE1 acting as a bridging protein between LAE1 and VELB. Interacts with VELB and VELC.

The protein localises to the nucleus. It localises to the cytoplasm. Component of the velvet transcription factor complex that controls sexual/asexual developmental ratio in response to light, promoting sexual development in the darkness while stimulating asexual sporulation under illumination. The velvet complex hat acts as a global regulator for secondary metabolite gene expression. Controls the expression of the cycotoxins fumonisins and fusarins gene cluster. Involved in cell wall integrity, cell surface hydrophobicity, hyphal polarity and conidiation pattern. Required for pathogenicity against maize seedlings. Involved in oxidative stress resistance by positively regulating the transcription of the catalase-encoding gene CAT2. This Gibberella moniliformis (strain M3125 / FGSC 7600) (Maize ear and stalk rot fungus) protein is Developmental and secondary metabolism regulator VE1.